Reading from the N-terminus, the 73-residue chain is Disintegrin lutosin (73 aa).

The region spanning 1–73 (EAGEECDCGS…ADCPRNGLYG (73 aa)) is the Disintegrin domain. Cystine bridges form between cysteine 6–cysteine 21, cysteine 8–cysteine 16, cysteine 15–cysteine 38, cysteine 29–cysteine 35, cysteine 34–cysteine 59, and cysteine 47–cysteine 66. A Cell attachment site motif is present at residues 51–53 (RGD).

This sequence belongs to the venom metalloproteinase (M12B) family. P-II subfamily. P-IIa sub-subfamily. As to quaternary structure, monomer (disintegrin). In terms of tissue distribution, expressed by the venom gland.

The protein localises to the secreted. Functionally, inhibits fibrinogen interaction with platelets. Acts by binding to alpha-IIb/beta-3 (ITGA2B/ITGB3) on the platelet surface and inhibits aggregation induced by ADP, thrombin, platelet-activating factor and collagen. This Crotalus lutosus (Great basin rattlesnake) protein is Disintegrin lutosin.